The primary structure comprises 372 residues: MSNQHTLLMFNLLPVGLNISTWWNFGSMLLTCTALQTTTGFFLAIHYTANINLAFTSIVHITRDVPYGWIMQNIHATGASMFFICIYIHIARGLYYGSYLNKEVWVSGTTLLVTLMATAFFGYVLPWGQMSFWAATVITNLLTAVPYLGSTLTTWLWGGFSINDPTLTRFFALHFILPFIIISTSLIHVMLLHNEGSSNPLGTNSDIDKIPFHPYHTYKDTLMLTTLLTLLFITTSFFPNIFNDPENFSKANPLITPQHIKPEWYFLFAYGILRSIPNKLGGTMALVMSIIILLTAPFTHTSHVRSMTFRPMAQVLFWTFIATFMLITWAATKPVEPPFTTIGLSTSILYFSFFIINPLLGWSENKIMNTHN.

Helical transmembrane passes span 25–45 (FGSMLLTCTALQTTTGFFLAI), 69–90 (WIMQNIHATGASMFFICIYIHI), 105–125 (WVSGTTLLVTLMATAFFGYVL), and 170–190 (FFALHFILPFIIISTSLIHVM). Residues His75 and His89 each contribute to the heme b site. Residues His174 and His188 each coordinate heme b. Position 193 (His193) interacts with a ubiquinone. Helical transmembrane passes span 218-238 (YKDTLMLTTLLTLLFITTSFF), 280-300 (LGGTMALVMSIIILLTAPFTH), 312-332 (MAQVLFWTFIATFMLITWAAT), and 339-358 (FTTIGLSTSILYFSFFIINP).

The protein belongs to the cytochrome b family. As to quaternary structure, the cytochrome bc1 complex contains 3 respiratory subunits (MT-CYB, CYC1 and UQCRFS1), 2 core proteins (UQCRC1 and UQCRC2) and probably 6 low-molecular weight proteins. It depends on heme b as a cofactor.

It is found in the mitochondrion inner membrane. Functionally, component of the ubiquinol-cytochrome c reductase complex (complex III or cytochrome b-c1 complex) that is part of the mitochondrial respiratory chain. The b-c1 complex mediates electron transfer from ubiquinol to cytochrome c. Contributes to the generation of a proton gradient across the mitochondrial membrane that is then used for ATP synthesis. The polypeptide is Cytochrome b (MT-CYB) (Heterodon simus (Southern hognose snake)).